The sequence spans 309 residues: Fe-S cluster assembly protein dre2 (309 aa).

An N-terminal SAM-like domain region spans residues 1–132 (MTTTIVLASP…LRRPAQVEAV (132 aa)). The linker stretch occupies residues 133-195 (PLKLSTKKSA…DALVSDEETQ (63 aa)). [2Fe-2S] cluster-binding residues include C207, C216, C219, and C221. The interval 207–221 (CSKPGKKKRCKNCTC) is fe-S binding site A. The [4Fe-4S] cluster site is built by C265, C268, C276, and C279. 2 short sequence motifs (cx2C motif) span residues 265-268 (CGSC) and 276-279 (CSGC). The tract at residues 265-279 (CGSCYLGDAFRCSGC) is fe-S binding site B.

It belongs to the anamorsin family. As to quaternary structure, monomer. Interacts with TAH18. Interacts with MIA40. [2Fe-2S] cluster serves as cofactor. The cofactor is [4Fe-4S] cluster.

It localises to the cytoplasm. It is found in the mitochondrion intermembrane space. In terms of biological role, component of the cytosolic iron-sulfur (Fe-S) protein assembly (CIA) machinery required for the maturation of extramitochondrial Fe-S proteins. Part of an electron transfer chain functioning in an early step of cytosolic Fe-S biogenesis, facilitating the de novo assembly of a [4Fe-4S] cluster on the scaffold complex CFD1-NBP35. Electrons are transferred to DRE2 from NADPH via the FAD- and FMN-containing protein TAH18. TAH18-DRE2 are also required for the assembly of the diferric tyrosyl radical cofactor of ribonucleotide reductase (RNR), probably by providing electrons for reduction during radical cofactor maturation in the catalytic small subunit RNR2. This chain is Fe-S cluster assembly protein dre2, found in Schizosaccharomyces japonicus (strain yFS275 / FY16936) (Fission yeast).